A 582-amino-acid chain; its full sequence is Vesicular glutamate transporter 2 (582 aa).

Residues 1 to 71 (MESVKQRILT…CTCFGLPRRY (71 aa)) are Cytoplasmic-facing. Residues 72–92 (IIAIMSGLGFCISFGIRCNLG) form a helical membrane-spanning segment. The Vesicular segment spans residues 93–125 (VAIVDMVNNSTIHRGGKVIKEKAKFNWDPETVG). N-linked (GlcNAc...) asparagine glycans are attached at residues Asn100 and Asn101. The helical transmembrane segment at 126–146 (MIHGSFFWGYIITQIPGGYIA) threads the bilayer. The Cytoplasmic segment spans residues 147–148 (SR). Residues 149 to 169 (LAANRVFGAAILLTSTLNMLI) traverse the membrane as a helical segment. Topologically, residues 170 to 177 (PSAARVHY) are vesicular. Residues 178 to 198 (GCVIFVRILQGLVEGVTYPAC) traverse the membrane as a helical segment. Topologically, residues 199 to 216 (HGIWSKWAPPLERSRLAT) are cytoplasmic. A helical transmembrane segment spans residues 217–237 (TSFCGSYAGAVIAMPLAGILV). The Vesicular portion of the chain corresponds to 238-244 (QYTGWSS). Residues 245–265 (VFYVYGSFGMIWYMFWLLVSY) traverse the membrane as a helical segment. Residues 266–310 (ESPAKHPTITDEERRYIEESIGESANLLGAMEKFKTPWRKFFTSM) are Cytoplasmic-facing. Residues 311 to 331 (PVYAIIVANFCRSWTFYLLLI) form a helical membrane-spanning segment. Over 332–349 (SQPAYFEEVFGFEISKVG) the chain is Vesicular. The chain crosses the membrane as a helical span at residues 350 to 370 (MLSAVPHLVMTIIVPIGGQIA). The Cytoplasmic portion of the chain corresponds to 371-386 (DFLRSKQILSTTTVRK). A helical transmembrane segment spans residues 387-407 (IMNCGGFGMEATLLLVVGYSH). Residues 408–409 (TR) lie on the Vesicular side of the membrane. The helical transmembrane segment at 410 to 430 (GVAISFLVLAVGFSGFAISGF) threads the bilayer. Over 431–443 (NVNHLDIAPRYAS) the chain is Cytoplasmic. The chain crosses the membrane as a helical span at residues 444–464 (ILMGISNGVGTLSGMVCPIIV). The Vesicular segment spans residues 465-477 (GAMTKNKSREEWQ). Asn470 carries an N-linked (GlcNAc...) asparagine glycan. A helical membrane pass occupies residues 478-498 (YVFLIAALVHYGGVIFYAIFA). Over 499–582 (SGEKQPWADP…YNYKDRDDYS (84 aa)) the chain is Cytoplasmic.

Belongs to the major facilitator superfamily. Sodium/anion cotransporter family. VGLUT subfamily.

It localises to the cytoplasmic vesicle. The protein resides in the secretory vesicle. Its subcellular location is the synaptic vesicle membrane. It is found in the synapse. The protein localises to the synaptosome. It localises to the cell membrane. The enzyme catalyses L-glutamate(out) = L-glutamate(in). It carries out the reaction 3 Na(+)(out) + phosphate(out) = 3 Na(+)(in) + phosphate(in). The catalysed reaction is phosphate(in) = phosphate(out). It catalyses the reaction K(+)(in) + H(+)(out) = K(+)(out) + H(+)(in). The enzyme catalyses chloride(in) = chloride(out). With respect to regulation, chloride channel activity is allosterically activated by lumenal H(+) and Cl(-) leading to synaptic vesicles acidification. The L-glutamate transport activity is allosterically activated by lumenal H(+) and Cl(-). The allosteric requirement for H(+) efficiently prevents non-vesicular efflux across the plasma membrane. The L-glutamate uniporter activity exhibits a biphasic dependence on chloride concentration. Functionally, multifunctional transporter that transports L-glutamate as well as multiple ions such as chloride, proton, potassium, sodium and phosphate. At the synaptic vesicle membrane, mainly functions as a uniporter which transports preferentially L-glutamate but also, phosphate from the cytoplasm into synaptic vesicles at presynaptic nerve terminals of excitatory neural cells. The L-glutamate or phosphate uniporter activity is electrogenic and is driven by the proton electrochemical gradient, mainly by the electrical gradient established by the vacuolar H(+)-ATPase across the synaptic vesicle membrane. In addition, functions as a chloride channel that allows a chloride permeation through the synaptic vesicle membrane therefore affects the proton electrochemical gradient and promotes synaptic vesicles acidification. Moreover, functions as a vesicular K(+)/H(+) antiport allowing to maintain the electrical gradient and to decrease chemical gradient and therefore sustain vesicular L-glutamate uptake. The vesicular H(+)/H(+) antiport activity is electroneutral. At the plasma membrane, following exocytosis, functions as a symporter of Na(+) and phosphate from the extracellular space to the cytoplasm allowing synaptic phosphate homeostasis regulation. The symporter activity is driven by an inside negative membrane potential and is electrogenic. Also involved in the regulation of retinal hyaloid vessel regression during postnatal development. May also play a role in the endocrine L-glutamatergic system of other tissues such as pineal gland and pancreas. The polypeptide is Vesicular glutamate transporter 2 (Bos taurus (Bovine)).